A 324-amino-acid chain; its full sequence is Ribose 1,5-bisphosphate isomerase (324 aa).

Substrate is bound by residues 22 to 25 (RGAG) and R65. The active-site Proton acceptor is C135. Residue 137 to 139 (SKA) coordinates substrate. D204 (proton donor) is an active-site residue. K240 lines the substrate pocket.

The protein belongs to the eIF-2B alpha/beta/delta subunits family. R15P isomerase subfamily.

It catalyses the reaction alpha-D-ribose 1,5-bisphosphate = D-ribulose 1,5-bisphosphate. Functionally, catalyzes the isomerization of ribose 1,5-bisphosphate (R15P) to ribulose 1,5-bisphosphate (RuBP), the CO(2) acceptor and substrate for RubisCO. Functions in an archaeal AMP degradation pathway, together with AMP phosphorylase and RubisCO. The sequence is that of Ribose 1,5-bisphosphate isomerase from Pyrococcus furiosus (strain ATCC 43587 / DSM 3638 / JCM 8422 / Vc1).